We begin with the raw amino-acid sequence, 291 residues long: MPVVTMRQLLDSGVHFGHQTRRWNPKMKRFIFTERNGIYIIDLQQSLSYIDRAYEFVKATVAHGGTVLFVGTKKQAQEAIAEQATRVGQPYVNQRWLGGMLTNFQTVAKRIQRMKELEEIDFDDVAGSAYTKKELLLLKRELTKLESNLGGIRNLTKAPSVLWIVDTKKEHLAVDEAKKLNIPVVAILDTNCDPDEVDFPIPGNDDAIRSVNLLTRVVADAVAEGLIARNNRGSGTTEAPEEPLAEWERELLEGSKAEEAAAAAPAENAEAPAAPAAEAPAAAEAPAEDAK.

The disordered stretch occupies residues 231-291 (NRGSGTTEAP…AAEAPAEDAK (61 aa)). Residues 246 to 259 (EWERELLEGSKAEE) show a composition bias toward basic and acidic residues. Positions 260–285 (AAAAAPAENAEAPAAPAAEAPAAAEA) are enriched in low complexity.

It belongs to the universal ribosomal protein uS2 family.

This Pseudarthrobacter chlorophenolicus (strain ATCC 700700 / DSM 12829 / CIP 107037 / JCM 12360 / KCTC 9906 / NCIMB 13794 / A6) (Arthrobacter chlorophenolicus) protein is Small ribosomal subunit protein uS2.